The following is a 478-amino-acid chain: Serine hydroxymethyltransferase, cytosolic (478 aa).

The residue at position 251 (Lys-251) is an N6-(pyridoxal phosphate)lysine.

The protein belongs to the SHMT family. Homotetramer. Identified in complex with FAM175B and the other subunits of the BRISC complex, at least composed of FAM175B/ABRO1, BRCC3/BRCC36, BABAM2 and BABAM1/NBA1. Pyridoxal 5'-phosphate serves as cofactor.

It is found in the cytoplasm. The catalysed reaction is (6R)-5,10-methylene-5,6,7,8-tetrahydrofolate + glycine + H2O = (6S)-5,6,7,8-tetrahydrofolate + L-serine. It participates in one-carbon metabolism; tetrahydrofolate interconversion. Functionally, interconversion of serine and glycine. This chain is Serine hydroxymethyltransferase, cytosolic (Shmt1), found in Mus musculus (Mouse).